A 907-amino-acid chain; its full sequence is NADH-quinone oxidoreductase subunit G (907 aa).

The region spanning Met1–Ile83 is the 2Fe-2S ferredoxin-type domain. [2Fe-2S] cluster-binding residues include Cys34, Cys45, Cys48, and Cys67. The 4Fe-4S His(Cys)3-ligated-type domain maps to Ile83–Gly122. [4Fe-4S] cluster contacts are provided by His99, Cys103, Cys106, Cys112, Cys151, Cys154, Cys157, Cys201, Cys228, Cys231, Cys235, and Cys263. The 4Fe-4S Mo/W bis-MGD-type domain maps to Met221–Glu277.

Belongs to the complex I 75 kDa subunit family. Composed of 13 different subunits. Subunits NuoCD, E, F, and G constitute the peripheral sector of the complex. Requires [2Fe-2S] cluster as cofactor. The cofactor is [4Fe-4S] cluster.

The enzyme catalyses a quinone + NADH + 5 H(+)(in) = a quinol + NAD(+) + 4 H(+)(out). In terms of biological role, NDH-1 shuttles electrons from NADH, via FMN and iron-sulfur (Fe-S) centers, to quinones in the respiratory chain. Couples the redox reaction to proton translocation (for every two electrons transferred, four hydrogen ions are translocated across the cytoplasmic membrane), and thus conserves the redox energy in a proton gradient. The polypeptide is NADH-quinone oxidoreductase subunit G (nuoG) (Buchnera aphidicola subsp. Baizongia pistaciae (strain Bp)).